Consider the following 168-residue polypeptide: Photosystem I assembly protein Ycf3 (168 aa).

3 TPR repeats span residues 35–68 (AFTY…EIDP), 72–105 (SYIL…NPFL), and 120–153 (GEKA…TPGN).

It belongs to the Ycf3 family.

Its subcellular location is the plastid membrane. Essential for the assembly of the photosystem I (PSI) complex. May act as a chaperone-like factor to guide the assembly of the PSI subunits. This chain is Photosystem I assembly protein Ycf3, found in Cuscuta exaltata (Tall dodder).